A 421-amino-acid polypeptide reads, in one-letter code: MEFPFDVDALFPERITVLDQHLRPPARRPGTTTPARVDLQQQIMTIIDELGKASAKAQNLSAPITSASRMQSNRHVVYILKDSSARPAGKGAIIGFIKVGYKKLFVLDDREAHNEVEPLCILDFYIHESVQRHGHGRELFQYMLQKERVEPHQLAIDRPSQKLLKFLNKHYNLETTVPQVNNFVIFEGFFAHQHRPPAPSLRATRHSRAAAVDPTPAAPARKLPPKRAEGDIKPYSSSDREFLKVAVEPPWPLNRAPRRATPPAHPPPRSSSLGNSPERGPLRPFVPEQELLRSLRLCPPHPTARLLLAADPGGSPAQRRRTRGTPPGLVAQSCCYSRHGGVNSSSPNTGNQDSKQGEQETKNRSASEEQALSQDGSGEKPMHTAPPQAPAPPAQSWTVGGDILNARFIRNLQERRSTRPW.

The N-acetyltransferase domain occupies 1-190 (MEFPFDVDAL…NNFVIFEGFF (190 aa)). K56 bears the N6-acetyllysine; by autocatalysis mark. Residue 124-137 (FYIHESVQRHGHGR) participates in acetyl-CoA binding. At K146 the chain carries N6-acetyllysine; by autocatalysis. Acetyl-CoA is bound at residue 160–169 (SQKLLKFLNK). Positions 196 to 235 (PPAPSLRATRHSRAAAVDPTPAAPARKLPPKRAEGDIKPY) are disordered. A compositionally biased stretch (low complexity) spans 209-221 (AAAVDPTPAAPAR). Residues 226-235 (KRAEGDIKPY) show a composition bias toward basic and acidic residues. N6-acetyllysine; by autocatalysis occurs at positions 233 and 244. The tract at residues 252 to 284 (PLNRAPRRATPPAHPPPRSSSLGNSPERGPLRP) is disordered. Residues S272 and S276 each carry the phosphoserine modification. R305 carries the post-translational modification Asymmetric dimethylarginine. Residues 306 to 402 (LLLAADPGGS…PAQSWTVGGD (97 aa)) form a disordered region. S315 is modified (phosphoserine). Position 323 is an omega-N-methylarginine (R323). A compositionally biased stretch (polar residues) spans 342–354 (VNSSSPNTGNQDS). Residues 355–367 (KQGEQETKNRSAS) are compositionally biased toward basic and acidic residues.

This sequence belongs to the acetyltransferase ATAT1 family. In terms of assembly, component of the BBSome complex. Interacts with AP2 alpha-adaptins, including AP2A2, but not with AP1 gamma-adaptin (AP1G1/AP1G2); this interaction is required for efficient alpha-tubulin acetylation, hence clathrin-coated pits are sites of microtubule acetylation. In terms of processing, autoacetylation strongly increases tubulin acetylation.

It localises to the cytoplasm. The protein resides in the membrane. The protein localises to the clathrin-coated pit. It is found in the cell junction. Its subcellular location is the focal adhesion. It localises to the cell projection. The protein resides in the axon. The protein localises to the cytoskeleton. It is found in the spindle. It carries out the reaction L-lysyl-[alpha-tubulin] + acetyl-CoA = N(6)-acetyl-L-lysyl-[alpha-tubulin] + CoA + H(+). In terms of biological role, specifically acetylates 'Lys-40' in alpha-tubulin on the lumenal side of microtubules. Promotes microtubule destabilization and accelerates microtubule dynamics; this activity may be independent of acetylation activity. Acetylates alpha-tubulin with a slow enzymatic rate, due to a catalytic site that is not optimized for acetyl transfer. Enters the microtubule through each end and diffuses quickly throughout the lumen of microtubules. Acetylates only long/old microtubules because of its slow acetylation rate since it does not have time to act on dynamically unstable microtubules before the enzyme is released. Required for normal sperm flagellar function. Promotes directional cell locomotion and chemotaxis, through AP2A2-dependent acetylation of alpha-tubulin at clathrin-coated pits that are concentrated at the leading edge of migrating cells. May facilitate primary cilium assembly. The polypeptide is Alpha-tubulin N-acetyltransferase 1 (Homo sapiens (Human)).